A 567-amino-acid chain; its full sequence is Dihydroxy-acid dehydratase (567 aa).

Residue Cys-52 coordinates [2Fe-2S] cluster. Asp-84 is a binding site for Mg(2+). Residue Cys-125 participates in [2Fe-2S] cluster binding. Positions 126 and 127 each coordinate Mg(2+). Lys-127 carries the N6-carboxylysine modification. Residue Cys-197 coordinates [2Fe-2S] cluster. Residue Glu-448 participates in Mg(2+) binding. Ser-474 (proton acceptor) is an active-site residue.

This sequence belongs to the IlvD/Edd family. As to quaternary structure, homodimer. The cofactor is [2Fe-2S] cluster. Mg(2+) is required as a cofactor.

It catalyses the reaction (2R)-2,3-dihydroxy-3-methylbutanoate = 3-methyl-2-oxobutanoate + H2O. The catalysed reaction is (2R,3R)-2,3-dihydroxy-3-methylpentanoate = (S)-3-methyl-2-oxopentanoate + H2O. It participates in amino-acid biosynthesis; L-isoleucine biosynthesis; L-isoleucine from 2-oxobutanoate: step 3/4. It functions in the pathway amino-acid biosynthesis; L-valine biosynthesis; L-valine from pyruvate: step 3/4. Its function is as follows. Functions in the biosynthesis of branched-chain amino acids. Catalyzes the dehydration of (2R,3R)-2,3-dihydroxy-3-methylpentanoate (2,3-dihydroxy-3-methylvalerate) into 2-oxo-3-methylpentanoate (2-oxo-3-methylvalerate) and of (2R)-2,3-dihydroxy-3-methylbutanoate (2,3-dihydroxyisovalerate) into 2-oxo-3-methylbutanoate (2-oxoisovalerate), the penultimate precursor to L-isoleucine and L-valine, respectively. This Streptococcus pneumoniae serotype 2 (strain D39 / NCTC 7466) protein is Dihydroxy-acid dehydratase.